The following is a 152-amino-acid chain: UPF0266 membrane protein Ent638_2389 (152 aa).

Helical transmembrane passes span 6–26 (IVLV…EFIM), 45–65 (VDAF…VMSQ), and 67–87 (ALLT…LFWI).

Belongs to the UPF0266 family.

It is found in the cell inner membrane. In Enterobacter sp. (strain 638), this protein is UPF0266 membrane protein Ent638_2389.